A 635-amino-acid polypeptide reads, in one-letter code: MISSVCVSSYRGRKSGNKPPSKTCLKEEMAKGEASEKIIINVGGTRHETYRSTLRTLPGTRLAWLADPDGGGRPETDGGGVGSSGSSGGGGCEFFFDRHPGVFAYVLNYYRTGKLHCPADVCGPLFEEELTFWGIDETDVEPCCWMTYRQHRDAEEALDIFESPDGGGSGAGPSDEAGDDERELALQRLGPHEGGAGHGAGSGGCRGWQPRMWALFEDPYSSRAARVVAFASLFFILVSITTFCLETHEAFNIDRNVTEILRVGNITSVHFRREVETEPILTYIEGVCVLWFTLEFLVRIVCCPDTLDFVKNLLNIIDFVAILPFYLEVGLSGLSSKAARDVLGFLRVVRFVRILRIFKLTRHFVGLRVLGHTLRASTNEFLLLIIFLALGVLIFATMIYYAERIGARPSDPRGNDHTDFKNIPIGFWWAVVTMTTLGYGDMYPKTWSGMLVGALCALAGVLTIAMPVPVIVNNFGMYYSLAMAKQKLPKKRKKHVPRPAQLESPMYCKSEETSPRDSTCSDTSPPAREEGMIERKRADSKQNGDANAVLSDEEGAGLTQPLASSPTPEERRALRRSTTRDRNKKAAACFLLSTGDYACADGSVRKGTFVLRDLPLQHSPEAACPPTAGTLFLPH.

The interval 1–24 (MISSVCVSSYRGRKSGNKPPSKTC) is disordered. Residues 1-28 (MISSVCVSSYRGRKSGNKPPSKTCLKEE) form an inactivation gate region. Residues 1-226 (MISSVCVSSY…EDPYSSRAAR (226 aa)) are Cytoplasmic-facing. Residues Ser-8, Ser-9, Ser-15, and Ser-21 each carry the phosphoserine modification. Residues His-116, Cys-122, Cys-143, and Cys-144 each contribute to the Zn(2+) site. The disordered stretch occupies residues 160–180 (IFESPDGGGSGAGPSDEAGDD). A helical membrane pass occupies residues 227 to 247 (VVAFASLFFILVSITTFCLET). N-linked (GlcNAc...) asparagine glycans are attached at residues Asn-256 and Asn-265. The helical transmembrane segment at 278–298 (EPILTYIEGVCVLWFTLEFLV) threads the bilayer. The Cytoplasmic segment spans residues 299–312 (RIVCCPDTLDFVKN). The helical transmembrane segment at 313–333 (LLNIIDFVAILPFYLEVGLSG) threads the bilayer. Residues 345–364 (FLRVVRFVRILRIFKLTRHF) form a helical; Voltage-sensor membrane-spanning segment. The Cytoplasmic portion of the chain corresponds to 365–380 (VGLRVLGHTLRASTNE). A helical transmembrane segment spans residues 381–401 (FLLLIIFLALGVLIFATMIYY). K(+)-binding residues include Thr-436, Leu-437, Gly-438, and Tyr-439. The Selectivity filter signature appears at 436–441 (TLGYGD). A helical membrane pass occupies residues 452-472 (VGALCALAGVLTIAMPVPVIV). At 473–635 (NNFGMYYSLA…PTAGTLFLPH (163 aa)) the chain is on the cytoplasmic side. Residues 490 to 580 (KKRKKHVPRP…RRALRRSTTR (91 aa)) form a disordered region. Basic and acidic residues predominate over residues 527-542 (AREEGMIERKRADSKQ).

This sequence belongs to the potassium channel family. C (Shaw) (TC 1.A.1.2) subfamily. Kv3.4/KCNC4 sub-subfamily. In terms of assembly, homotetramer. Heterotetramer of potassium channel proteins. In terms of processing, phosphorylation of serine residues in the inactivation gate inhibits rapid channel closure.

The protein localises to the membrane. The catalysed reaction is K(+)(in) = K(+)(out). Voltage-gated potassium channel that opens in response to the voltage difference across the membrane, forming a potassium-selective channel through which potassium ions pass in accordance with their electrochemical gradient. The channel displays rapid activation and inactivation kinetics. The sequence is that of Voltage-gated potassium channel KCNC4 from Homo sapiens (Human).